The sequence spans 498 residues: SCADDRNPLEECFRETDYEEFLEIARNGLTVTSNPKHVVIVGAGMAGLSAAYVLAGAGHQVTVLEASERVGGRVRTYRKKDWYANLGPMRLPTKHRIVREYIRKFGLQLNEFFQENENAWYFIKNIRKRVREVKNNPGILEYPVKPSEEGKSAAQLYVESLRKVVKELKRTNCKYILDKYDTYSTKEYLLKEGNLSPGAVDMIGDLLNEDSGYYVSFIESLKHDDIFGYEKRFDEIVGGMDQLPTSMYEAIKEKVQVHFNARVIEIQQNDRETKVTYQTSANEMPSVTADYVIVCTTSRAARRIKFEPPLPPKKAHALRSVHYRSGTKIFLTCKRKFWEDDGIRGGKSTTDLPSRFIYYPNHNFTSGVGVIIAYGIGDDANFFQALDFKDCADIVINDLSLIHQLPKEDIQTFCRPSMIQRWSLDKYAMGGITTFTPYQFQHFSEALTAPFKRIYFAGEYTAQFHGWIDSTIKSGLTAARDVNRASENPSGIHLSNDN.

The N-terminal stretch at serine 1 to cysteine 2 is a signal peptide. Cysteine 12 and cysteine 173 form a disulfide bridge. Residues methionine 45 to alanine 46, glutamate 65 to alanine 66, arginine 73, and glycine 87 to arginine 90 contribute to the FAD site. Substrate-binding residues include arginine 90 and histidine 223. Valine 263 is an FAD binding site. A disulfide bond links cysteine 333 and cysteine 414. An N-linked (GlcNAc...) asparagine glycan is attached at asparagine 363. Tyrosine 374 contacts substrate. FAD is bound by residues glutamate 459 and glycine 466 to threonine 471. Residue glycine 466 to tryptophan 467 coordinates substrate.

This sequence belongs to the flavin monoamine oxidase family. FIG1 subfamily. As to quaternary structure, monomer. This is in contrast with most of its orthologs, that are non-covalently linked homodimers. FAD serves as cofactor. As to expression, expressed by the venom gland.

It localises to the secreted. The catalysed reaction is an L-alpha-amino acid + O2 + H2O = a 2-oxocarboxylate + H2O2 + NH4(+). It catalyses the reaction L-leucine + O2 + H2O = 4-methyl-2-oxopentanoate + H2O2 + NH4(+). Catalyzes an oxidative deamination of predominantly hydrophobic and aromatic L-amino acids, thus producing hydrogen peroxide that may contribute to the diverse toxic effects of this enzyme. Shows activity on L-Leu. Damages cell membranes of the Gram-positive bacteria S.aureus (MIC=8 ug/ml and MBC=16 ug/ml) and the Gram-negative bacteria A.baumannii (MIC=16 ug/ml and MBC=32 ug/ml). This antimicrobial activity is dependent on the production of hydrogen peroxyde, since it is inhibited by catalase, a hydrogen peroxyde scavenger. This Crotalus durissus cumanensis (South American rattlesnake) protein is L-amino acid oxidase Cdc18.